Consider the following 299-residue polypeptide: J domain-containing protein CG6693 (299 aa).

Positions 15–82 (DVYKLMELAR…QKRALYDEQG (68 aa)) constitute a J domain. Serine 239 is subject to Phosphoserine. The segment at 266-299 (FEKKKKKSKKPAAKQETKPKLNGVKAGRVEKGKN) is disordered. The segment covering 268–277 (KKKKKSKKPA) has biased composition (basic residues).

The protein is J domain-containing protein CG6693 of Drosophila melanogaster (Fruit fly).